Reading from the N-terminus, the 95-residue chain is Phospholipase A2 inhibitor gammaCdcPLI (95 aa).

4 cysteine pairs are disulfide-bonded: Cys-2–Cys-26, Cys-5–Cys-12, Cys-19–Cys-30, and Cys-61–Cys-77.

As to quaternary structure, forms dimers or higher order oligomers in a temperature-dependent manner in vitro. Expressed by the liver.

The protein resides in the secreted. Inhibits the enzymatic activity of basic and acidic PLA2 from B.jararacussu and B.pauloensis, respectively, in a dose-dependent manner. Also inhibits myotoxicity and cytotoxicity of BnSp-7 of B.pauloensis. This chain is Phospholipase A2 inhibitor gammaCdcPLI, found in Crotalus durissus collilineatus (Brazilian rattlesnake).